Here is a 212-residue protein sequence, read N- to C-terminus: UPF0319 protein PBPRA2789 (212 aa).

An N-terminal signal peptide occupies residues 1–21 (MKKILLAFTLPLVLASQTAMA).

This sequence belongs to the UPF0319 family.

In Photobacterium profundum (strain SS9), this protein is UPF0319 protein PBPRA2789.